A 463-amino-acid chain; its full sequence is NF-kappa-B-activating protein (463 aa).

Residues 1 to 14 (MRSRSRSRSRQRER) are compositionally biased toward basic residues. The interval 1–358 (MRSRSRSRSR…GGSLNQKDFG (358 aa)) is disordered. 2 stretches are compositionally biased toward basic and acidic residues: residues 15–29 (RRSD…ERRT) and 39–71 (VSRE…DAVP). A compositionally biased stretch (low complexity) spans 78–98 (SSPSRSSSSSSSDRSSSSRSP). Residues 107-125 (KSVERWPNDRYHENNDRRQ) show a composition bias toward basic and acidic residues. Serine 136, serine 189, and serine 191 each carry phosphoserine. A Phosphothreonine modification is found at threonine 195. The segment covering 208–238 (PKKKKKKGKRKHKKSEKKSKKKSKKSKKKKS) has biased composition (basic residues). Positions 241–267 (ESSSSSSSSSSEDSSDESSSSSSSSSS) are enriched in low complexity. Residues 268–278 (DSEDESEEEDV) are compositionally biased toward acidic residues. The segment covering 279–288 (WLEKTADGIK) has biased composition (basic and acidic residues). Residues 289–312 (KPKKKKSSTSKKDKKSKKKKKKRK) are compositionally biased toward basic residues. Residues 330–340 (KNKESASHNDE) show a composition bias toward basic and acidic residues.

It belongs to the NKAP family.

It localises to the nucleus. In terms of biological role, tumor suppressor involved in maintaining genome integrity. Influences gene expression and mRNA splicing. This is NF-kappa-B-activating protein from Drosophila melanogaster (Fruit fly).